Reading from the N-terminus, the 104-residue chain is Protein SMALL AUXIN UP-REGULATED RNA 9 (104 aa).

This sequence belongs to the ARG7 family. Interacts with and inhibits PP2C-D subfamily of type 2C phosphatases such as PP2C67/PP2C-D1. As to expression, expressed in etiolated hypocotyls, petioles, leaves and flowers.

The protein localises to the cell membrane. Its function is as follows. Provide a mechanistic link between auxin and plasma membrane H(+)-ATPases (PM H(+)-ATPases, e.g. AHA1 and AHA2), and triggers PM H(+)-ATPases activity by promoting phosphorylation of their C-terminal autoinhibitory domain as a result of PP2C-D subfamily of type 2C phosphatases inhibition, thus leading to the acidification of the apoplast and the facilitation of solutes and water uptake to drive cell expansion. Triggers plant growth probably by promoting cell elongation. Regulates branch angles and bending. Probably involved in light intensity mediated root development. The sequence is that of Protein SMALL AUXIN UP-REGULATED RNA 9 from Arabidopsis thaliana (Mouse-ear cress).